The chain runs to 556 residues: Formate--tetrahydrofolate ligase (556 aa).

Position 65-72 (65-72 (TPAGEGKS)) interacts with ATP.

This sequence belongs to the formate--tetrahydrofolate ligase family.

It catalyses the reaction (6S)-5,6,7,8-tetrahydrofolate + formate + ATP = (6R)-10-formyltetrahydrofolate + ADP + phosphate. It participates in one-carbon metabolism; tetrahydrofolate interconversion. In Enterococcus faecalis (strain ATCC 700802 / V583), this protein is Formate--tetrahydrofolate ligase.